A 1111-amino-acid chain; its full sequence is Zinc finger protein GLI1 (1111 aa).

The segment at glycine 52 to valine 78 is disordered. Residues serine 123–leucine 127 are interaction with SUFU. 5 C2H2-type zinc fingers span residues threonine 238–histidine 263, phenylalanine 271–histidine 298, histidine 304–histidine 328, tyrosine 334–histidine 359, and tyrosine 365–histidine 390. The tract at residues lysine 286–histidine 294 is interaction with DNA. 2 interaction with DNA regions span residues alanine 348 to lysine 353 and aspartate 378 to lysine 384. Positions aspartate 378 to proline 487 are disordered. The segment covering glutamate 416 to arginine 431 has biased composition (basic and acidic residues). Positions methionine 439 to serine 465 are enriched in polar residues. Lysine 520 is modified (N6-acetyllysine). Disordered regions lie at residues glycine 528–leucine 583, alanine 598–aspartate 649, threonine 673–serine 692, and proline 832–serine 891. Low complexity predominate over residues serine 546–serine 562. Basic and acidic residues predominate over residues arginine 640 to aspartate 649. A compositionally biased stretch (pro residues) spans leucine 855–proline 870. A Glycyl lysine isopeptide (Lys-Gly) (interchain with G-Cter in SUMO2) cross-link involves residue lysine 1008. Residues leucine 1064–methionine 1093 form a disordered region.

It belongs to the GLI C2H2-type zinc-finger protein family. In terms of assembly, interacts with KIF7. Interacts with STK36. Interacts with ZIC1; the interaction enhances transcription activation. Interacts with SUFU; this inhibits transcriptional activation by GLI1. Phosphorylated in vitro by ULK3. Post-translationally, acetylation at Lys-520 down-regulates transcriptional activity. Deacetylated by HDAC1. In terms of processing, ubiquitinated by the CRL2(FEM1B) complex, suppressing GLI1 transcriptional activator activity.

It is found in the cytoplasm. The protein localises to the nucleus. In terms of biological role, acts as a transcriptional activator. Binds to the DNA consensus sequence 5'-GACCACCCA-3'. Regulates the transcription of specific genes during normal development. Plays a role in craniofacial development and digital development, as well as development of the central nervous system and gastrointestinal tract. Mediates SHH signaling. Plays a role in cell proliferation and differentiation via its role in SHH signaling. The chain is Zinc finger protein GLI1 (Gli1) from Mus musculus (Mouse).